Here is a 59-residue protein sequence, read N- to C-terminus: Ribosome biogenesis protein Nop10 (59 aa).

Belongs to the NOP10 family.

Functionally, involved in ribosome biogenesis; more specifically in 18S rRNA pseudouridylation and in cleavage of pre-rRNA. This is Ribosome biogenesis protein Nop10 from Thermococcus kodakarensis (strain ATCC BAA-918 / JCM 12380 / KOD1) (Pyrococcus kodakaraensis (strain KOD1)).